The sequence spans 607 residues: Serum albumin (607 aa).

A signal peptide spans Met-1 to Ser-16. The propeptide occupies Lys-17–Tyr-20. 3 consecutive Albumin domains span residues Leu-19 to Lys-209, Lys-210 to Ala-401, and Ala-403 to Glu-600. Position 27 (His-27) interacts with Cu cation. 17 disulfide bridges follow: Cys-77-Cys-86, Cys-99-Cys-115, Cys-114-Cys-125, Cys-147-Cys-192, Cys-191-Cys-200, Cys-223-Cys-269, Cys-268-Cys-276, Cys-288-Cys-302, Cys-301-Cys-312, Cys-339-Cys-384, Cys-383-Cys-392, Cys-415-Cys-461, Cys-460-Cys-471, Cys-484-Cys-500, Cys-499-Cys-510, Cys-537-Cys-582, and Cys-581-Cys-590. Zn(2+)-binding residues include His-270 and Asp-272. Ca(2+) contacts are provided by Asp-272 and Glu-275.

The protein belongs to the ALB/AFP/VDB family. As to expression, plasma. In the skin, widely distributed around the membranes of epithelial layer cells and within the stratum spongiosum of the dermis (at protein level).

The protein localises to the secreted. Its function is as follows. Serum albumin, the main protein of plasma, has a good binding capacity for water, Ca(2+), Na(+), K(+), fatty acids, hormones, bilirubin and drugs. Its main function is the regulation of the colloidal osmotic pressure of blood. Potent inhibitor of trypsin but has no inhibitory effect on thrombin, chymotrypsin, elastase and subtilisin. In Bombina maxima (Giant fire-bellied toad), this protein is Serum albumin.